The chain runs to 228 residues: MCLIFTKDRFEKSPFLKFIILLLPFSYSAVQYALLRTNWKSDNKPEGILQSILYHTLSLLLLAFAAISILSITAFTLDKWESSESIFFSIVLPSFFIPPTYLLSTSCRLVPGQIGFTDTGINVLIDIPILLCPLVSLVLIIALEETECCYYSAIISSVFILIRLLREKYSPSEKSTLPTAPWRVAILVLILTLAALIYAFMMWGSMDILNDHFGLLNKLKRVFPFTNA.

This sequence belongs to the UPF0328 family.

The polypeptide is UPF0328 protein ECU07_0040 (Encephalitozoon cuniculi (strain GB-M1) (Microsporidian parasite)).